We begin with the raw amino-acid sequence, 192 residues long: UPF0312 protein Ent638_1570 (192 aa).

A signal peptide spans 1-22; sequence MKKRLLGIALGSLLFTTGSAVA.

The protein belongs to the UPF0312 family. Type 1 subfamily.

The protein resides in the periplasm. This Enterobacter sp. (strain 638) protein is UPF0312 protein Ent638_1570.